Here is a 398-residue protein sequence, read N- to C-terminus: Abhydrolase domain-containing protein 2 (398 aa).

Topologically, residues 1 to 4 (MSTA) are cytoplasmic. The chain crosses the membrane as a helical; Signal-anchor for type II membrane protein span at residues 5-22 (FLTLIAVIVCILFRILNV). At 23–398 (HSQPLKPSVW…MMHEVGKVAP (376 aa)) the chain is on the extracellular side. Positions 113 to 365 (VAICPGIANS…HGGHLGFYEG (253 aa)) constitute an AB hydrolase-1 domain. Residues Ser192, Asp328, and His359 each act as charge relay system in the active site.

It belongs to the AB hydrolase superfamily. AB hydrolase 4 family.

It localises to the membrane. The chain is Abhydrolase domain-containing protein 2 (Hydr2) from Drosophila melanogaster (Fruit fly).